Consider the following 142-residue polypeptide: Holo-[acyl-carrier-protein] synthase (142 aa).

Residues D9 and E63 each contribute to the Mg(2+) site.

The protein belongs to the P-Pant transferase superfamily. AcpS family. Requires Mg(2+) as cofactor.

It localises to the cytoplasm. It carries out the reaction apo-[ACP] + CoA = holo-[ACP] + adenosine 3',5'-bisphosphate + H(+). In terms of biological role, transfers the 4'-phosphopantetheine moiety from coenzyme A to a Ser of acyl-carrier-protein. This chain is Holo-[acyl-carrier-protein] synthase, found in Burkholderia lata (strain ATCC 17760 / DSM 23089 / LMG 22485 / NCIMB 9086 / R18194 / 383).